The primary structure comprises 920 residues: Anillin-related medial ring protein mid1 (920 aa).

Residues 1–452 (MKEQEFSYRE…LSSEDLRHPS (452 aa)) form a disordered region. Phosphoserine is present on residues serine 15 and serine 24. Threonine 34 is modified (phosphothreonine). Phosphoserine is present on residues serine 46 and serine 62. The short motif at 69-81 (LNVATDLLESLDL) is the Nuclear export sequence (NES) 1 element. At serine 95 the chain carries Phosphoserine. Over residues 461 to 481 (RTYSNYCENEPNKSSQSLVSS) the composition is skewed to polar residues. At serine 531 the chain carries Phosphoserine. The interval 538–561 (DLPSQDKSTSYEVPNGTENQSPRP) is disordered. Residues 542-561 (QDKSTSYEVPNGTENQSPRP) show a composition bias toward polar residues. Residues 551 to 920 (PNGTENQSPR…WLQEYVNFMA (370 aa)) form a cryptic lipid-binding C2 domain region. The short motif at 681–710 (RKFFDKLFNRRKKRKLNKAAAVENSKAKKS) is the Nuclear localization sequence (NLS) element. The Nuclear export sequence (NES) 2 motif lies at 763-773 (LGNLTLTCLYI). One can recognise a PH domain in the interval 802 to 901 (LYNEGYLYRL…WLQVMNSRSF (100 aa)).

As to quaternary structure, homodimer. Interacts with blt1 and cdr2. Interacts with gef2. Interacts with plo1 and rng2. Interacts with fhk2 and sep1. Interacts with clp1. In terms of processing, phosphorylated. At the onset of mitosis, becomes hyperphosphorylated, leaves the nucleus, and forms a medial ring. Phosphorylation by plo1 and other kinases may contribute to solubilizing mid1 for export from the nucleus. Phosphorylation by sid2 drives removal from the cortex at the actomyosin contractile ring constriction onset.

The protein localises to the nucleus. It is found in the cytoplasm. Its subcellular location is the cell cortex. The protein resides in the cytoskeleton. In terms of biological role, scaffold protein that anchors the contractile ring (CR) at the cell equator during cytokinesis. At the onset of mitosis, membrane-bound oligomers of mid1 assemble recruitment platforms for cytokinetic ring components at the medial cortex and stabilize the ring position during its compaction. Recruits dephosphorylated myo2, but also rng2, clp1 and cdc15 to nodes and to place cytokinetic nodes around the cell equator the medial cortex to promote the ring assembly in cooperation with F-actin. Necessary to stabilize the mitotic spindle perpendicular to the axis of cell division. Also recruits the cdr2 kinase to the CR. In the nucleus, binds to the promoter regions of M-G1 transcribed genes to negatively regulate their expression. The protein is Anillin-related medial ring protein mid1 of Schizosaccharomyces pombe (strain 972 / ATCC 24843) (Fission yeast).